A 75-amino-acid chain; its full sequence is Sec-independent protein translocase protein TatA (75 aa).

Residues 1-21 traverse the membrane as a helical segment; the sequence is MGISIWQLLIVLGIVILLFGT. Residues 41 to 75 are disordered; sequence SMSDEEEKNAEQQPLEKQNAEQQAQAEDKPKEKQG. Low complexity predominate over residues 56 to 65; sequence EKQNAEQQAQ. Over residues 66–75 the composition is skewed to basic and acidic residues; sequence AEDKPKEKQG.

Belongs to the TatA/E family. As to quaternary structure, the Tat system comprises two distinct complexes: a TatABC complex, containing multiple copies of TatA, TatB and TatC subunits, and a separate TatA complex, containing only TatA subunits. Substrates initially bind to the TatABC complex, which probably triggers association of the separate TatA complex to form the active translocon.

Its subcellular location is the cell inner membrane. In terms of biological role, part of the twin-arginine translocation (Tat) system that transports large folded proteins containing a characteristic twin-arginine motif in their signal peptide across membranes. TatA could form the protein-conducting channel of the Tat system. The sequence is that of Sec-independent protein translocase protein TatA from Marinobacter nauticus (strain ATCC 700491 / DSM 11845 / VT8) (Marinobacter aquaeolei).